The primary structure comprises 283 residues: Protein boule-like (283 aa).

The disordered stretch occupies residues Met1–Pro25. One can recognise an RRM domain in the interval Asn33–Arg110. Residues Pro160–Gln184 enclose the DAZ domain.

Belongs to the RRM DAZ family. As to quaternary structure, interacts with DAZ1 and DAZL.

It is found in the cytoplasm. Its function is as follows. Probable RNA-binding protein, which may be required during spermatogenesis. May act by binding to the 3'-UTR of mRNAs and regulating their translation. This is Protein boule-like (BOLL) from Macaca fascicularis (Crab-eating macaque).